Reading from the N-terminus, the 156-residue chain is Arginine repressor (156 aa).

This sequence belongs to the ArgR family.

The protein resides in the cytoplasm. Its pathway is amino-acid biosynthesis; L-arginine biosynthesis [regulation]. Functionally, regulates arginine biosynthesis genes. The protein is Arginine repressor of Yersinia enterocolitica serotype O:8 / biotype 1B (strain NCTC 13174 / 8081).